A 349-amino-acid chain; its full sequence is Probable inactive tRNA-specific adenosine deaminase-like protein 3 (349 aa).

Residue Met1 is modified to N-acetylmethionine. Residues Met1 to Gln25 are disordered. Residues Ala171–Phe334 form the CMP/dCMP-type deaminase domain. Zn(2+)-binding residues include His223, Cys289, and Cys292.

It belongs to the cytidine and deoxycytidylate deaminase family. ADAT3 subfamily. It depends on Zn(2+) as a cofactor.

The protein is Probable inactive tRNA-specific adenosine deaminase-like protein 3 (Adat3) of Rattus norvegicus (Rat).